The sequence spans 144 residues: Large ribosomal subunit protein uL15 (144 aa).

Residues 20-49 (GRGIGSGLGKTGGRGHKGQKSRSGGFHKVG) are disordered. The segment covering 21-31 (RGIGSGLGKTG) has biased composition (gly residues).

The protein belongs to the universal ribosomal protein uL15 family. In terms of assembly, part of the 50S ribosomal subunit.

In terms of biological role, binds to the 23S rRNA. This is Large ribosomal subunit protein uL15 from Neisseria gonorrhoeae (strain ATCC 700825 / FA 1090).